The following is a 304-amino-acid chain: UDP-3-O-acyl-N-acetylglucosamine deacetylase (304 aa).

Positions 78, 237, and 241 each coordinate Zn(2+). The active-site Proton donor is His-264.

Belongs to the LpxC family. It depends on Zn(2+) as a cofactor.

The enzyme catalyses a UDP-3-O-[(3R)-3-hydroxyacyl]-N-acetyl-alpha-D-glucosamine + H2O = a UDP-3-O-[(3R)-3-hydroxyacyl]-alpha-D-glucosamine + acetate. It participates in glycolipid biosynthesis; lipid IV(A) biosynthesis; lipid IV(A) from (3R)-3-hydroxytetradecanoyl-[acyl-carrier-protein] and UDP-N-acetyl-alpha-D-glucosamine: step 2/6. In terms of biological role, catalyzes the hydrolysis of UDP-3-O-myristoyl-N-acetylglucosamine to form UDP-3-O-myristoylglucosamine and acetate, the committed step in lipid A biosynthesis. The protein is UDP-3-O-acyl-N-acetylglucosamine deacetylase of Nitrosococcus oceani (strain ATCC 19707 / BCRC 17464 / JCM 30415 / NCIMB 11848 / C-107).